The following is a 156-amino-acid chain: ATP synthase subunit b (156 aa).

The helical transmembrane segment at 5–25 threads the bilayer; that stretch reads LTLIGQAIAFAFFVAFCMKFV.

Belongs to the ATPase B chain family. As to quaternary structure, F-type ATPases have 2 components, F(1) - the catalytic core - and F(0) - the membrane proton channel. F(1) has five subunits: alpha(3), beta(3), gamma(1), delta(1), epsilon(1). F(0) has three main subunits: a(1), b(2) and c(10-14). The alpha and beta chains form an alternating ring which encloses part of the gamma chain. F(1) is attached to F(0) by a central stalk formed by the gamma and epsilon chains, while a peripheral stalk is formed by the delta and b chains.

It is found in the cell inner membrane. Functionally, f(1)F(0) ATP synthase produces ATP from ADP in the presence of a proton or sodium gradient. F-type ATPases consist of two structural domains, F(1) containing the extramembraneous catalytic core and F(0) containing the membrane proton channel, linked together by a central stalk and a peripheral stalk. During catalysis, ATP synthesis in the catalytic domain of F(1) is coupled via a rotary mechanism of the central stalk subunits to proton translocation. Component of the F(0) channel, it forms part of the peripheral stalk, linking F(1) to F(0). This is ATP synthase subunit b from Acinetobacter baumannii (strain AYE).